Consider the following 429-residue polypeptide: MSIYHDVIKSEVFPALGCTEPIAVAYAASLAAERLGAEVETVTASVDPGVFKNGFAVTVPKTGGLKGNVIAAALGALIARPELKMEILSGADERLLAQAELLVSSGRATVALVKERTDLYIDVVVTGGGRTARAVLEGGHTNIVRLECDGRILLNADEPVSAVDSHAYRAVLRQMTFSEMIGLLDDLDQGDLVYLKRGVEMNLRIAEEGKQLTKVGHYVEELVRKGFLLADVVSSSKILTASASDARMAGLPYPVMSSGGSGNQGIVAILVPYNVGMFFHVPEETILRSIALSHLVNAYIKCHTGDLAPICGCAIAAGVGAAVAIVYQQAGPDMHKIDLAVNTIISDIGGMLCDGAKGGCALKVVSSTDAAIRAAYMALNGHGISEEEGFVGKSAEETIHNLSRIADKGMALVDDTMLCIMLQKRSTEP.

Belongs to the UPF0597 family.

In Geobacter sulfurreducens (strain ATCC 51573 / DSM 12127 / PCA), this protein is UPF0597 protein GSU1527.